We begin with the raw amino-acid sequence, 55 residues long: Sporulation killing factor (55 aa).

A propeptide spanning residues 1-29 (MKRNQKEWESVSKKGLMKPGGTSIVKAAG) is cleaved from the precursor. The cysteines at positions 30 and 45 are disulfide-linked. The cyclopeptide (Cys-Ile) cross-link spans 30–55 (CMGCWASKSIAMTRVCALPHPAMRAI). The 2-(S-cysteinyl)-methionine (Cys-Met) cross-link spans 33-41 (CWASKSIAM).

Post-translationally, this is a cyclic peptide. The first step in SKF maturation is probably thioether bond formation.

The protein localises to the secreted. Produces a 26-residue extracellular sporulation killing factor (SKF) that induces the lysis of other B.subtilis cells that have not entered the sporulation pathway, providing a source of nutrients to support sporulation, and at the same time delaying commitment to the energetically expensive and irreversible onset of sporulation. Can also inhibit growth of other bacteria at high concentrations. Addition of SKF to solid cultures induces killing, but it is much less effective than SDP (AC O34344). Has a role in protecting the secreted lipase LipA against proteolysis, either by modulating its folding or by acting as a protease inhibitor. The sequence is that of Sporulation killing factor from Bacillus subtilis (strain 168).